The chain runs to 252 residues: Trypsin iota (252 aa).

Positions 1 to 19 (MAVYGIVATVLVLLLLGDA) are cleaved as a signal peptide. Positions 20–27 (SDVEATGR) are cleaved as a propeptide — activation peptide. The region spanning 28–250 (IIGGSDQLIR…LRPWIVKAAN (223 aa)) is the Peptidase S1 domain. Cysteines 53 and 69 form a disulfide. Catalysis depends on charge relay system residues H68 and D113. Intrachain disulfides connect C175/C193 and C202/C226. S206 functions as the Charge relay system in the catalytic mechanism.

The protein belongs to the peptidase S1 family.

It localises to the secreted. The protein resides in the extracellular space. It carries out the reaction Preferential cleavage: Arg-|-Xaa, Lys-|-Xaa.. This Drosophila melanogaster (Fruit fly) protein is Trypsin iota (iotaTry).